A 268-amino-acid polypeptide reads, in one-letter code: Sexual development regulator velC (268 aa).

Over residues M1–P13 the composition is skewed to basic and acidic residues. Disordered regions lie at residues M1–S124 and D142–H165. Positions E14–R26 are enriched in pro residues. In terms of domain architecture, Velvet spans S28 to R257. A compositionally biased stretch (basic and acidic residues) spans D92–D121.

Belongs to the velvet family. VelC subfamily. In terms of assembly, interacts with velA and vosA.

Its subcellular location is the nucleus. Functionally, velvet-domain-containing protein that acts as a positive regulator of sexual development. This chain is Sexual development regulator velC, found in Penicillium rubens (strain ATCC 28089 / DSM 1075 / NRRL 1951 / Wisconsin 54-1255) (Penicillium chrysogenum).